Here is an 89-residue protein sequence, read N- to C-terminus: UPF0335 protein Nham_1221 (89 aa).

Belongs to the UPF0335 family.

This chain is UPF0335 protein Nham_1221, found in Nitrobacter hamburgensis (strain DSM 10229 / NCIMB 13809 / X14).